A 496-amino-acid polypeptide reads, in one-letter code: Probable fatty acyl-CoA reductase 5 (496 aa).

This sequence belongs to the fatty acyl-CoA reductase family. As to expression, expressed in the endodermal cell layer surrounding the central vasculature in roots. Expressed in floral organs of very young unopened buds and receptacle of siliques.

The enzyme catalyses a long-chain fatty acyl-CoA + 2 NADPH + 2 H(+) = a long-chain primary fatty alcohol + 2 NADP(+) + CoA. Functionally, catalyzes the reduction of fatty acyl-CoA to fatty alcohols. Catalyzes specifically the formation of C18:0 fatty alcohol. Provides the fatty alcohols required for synthesis of suberin in roots, seed coat and wound-induced leaf tissue. Provides the fatty alcohols required for synthesis of alkyl hydroxycinnamates in root waxes. This is Probable fatty acyl-CoA reductase 5 from Arabidopsis thaliana (Mouse-ear cress).